The sequence spans 279 residues: Phosphatidylglycerol--prolipoprotein diacylglyceryl transferase (279 aa).

4 consecutive transmembrane segments (helical) span residues isoleucine 4–tyrosine 24, valine 44–serine 64, leucine 76–phenylalanine 96, and glycine 104–alanine 124. An a 1,2-diacyl-sn-glycero-3-phospho-(1'-sn-glycerol)-binding site is contributed by arginine 126. 3 helical membrane passes run leucine 182 to leucine 202, proline 206 to leucine 226, and leucine 245 to leucine 265.

Belongs to the Lgt family.

The protein resides in the cell inner membrane. The enzyme catalyses L-cysteinyl-[prolipoprotein] + a 1,2-diacyl-sn-glycero-3-phospho-(1'-sn-glycerol) = an S-1,2-diacyl-sn-glyceryl-L-cysteinyl-[prolipoprotein] + sn-glycerol 1-phosphate + H(+). The protein operates within protein modification; lipoprotein biosynthesis (diacylglyceryl transfer). Functionally, catalyzes the transfer of the diacylglyceryl group from phosphatidylglycerol to the sulfhydryl group of the N-terminal cysteine of a prolipoprotein, the first step in the formation of mature lipoproteins. This is Phosphatidylglycerol--prolipoprotein diacylglyceryl transferase from Thermus thermophilus (strain ATCC 27634 / DSM 579 / HB8).